The sequence spans 657 residues: Cyclic-di-AMP phosphodiesterase PdeA (657 aa).

Helical transmembrane passes span Pro13–Leu35 and Ala37–Phe53. The PAS-like stretch occupies residues Arg74–Met137. Residues Asn175–Pro303 enclose the GGDEF domain. The segment at Val342 to Ile498 is DHH. Mn(2+)-binding residues include His347, Asp351, Asp353, Asp422, His446, and Asp501. The segment at Val592 to Leu645 is DHHA1.

The protein belongs to the GdpP/PdeA phosphodiesterase family. Heme b is required as a cofactor. Requires Mn(2+) as cofactor.

It localises to the cell membrane. The catalysed reaction is 3',3'-c-di-AMP + H2O = 5'-O-phosphonoadenylyl-(3'-&gt;5')-adenosine + H(+). Functionally, has phosphodiesterase (PDE) activity against cyclic-di-AMP (c-di-AMP). Overexpression decreases export of c-di-AMP, leads to slightly increased susceptibility to the antibiotic cefuroxime and somewhat slower growth in macrophages. There are at least 2 PDEs for c-di-AMP in this bacteria (this one and pgpH); this may be the major PDE for intracellular growth in host macrophages. During host infection c-di-AMP is secreted into the host cytoplasm which leads to interferon-beta production and secretion by the host. c-di-AMP is a second messenger that mediates growth, cell wall stability and virulence. May monitor cellular heme or NO levels. The polypeptide is Cyclic-di-AMP phosphodiesterase PdeA (Listeria monocytogenes serotype 1/2a (strain 10403S)).